Here is a 2226-residue protein sequence, read N- to C-terminus: Histone-lysine N-methyltransferase ash1 (2226 aa).

The segment at 1 to 145 (MSCSQNETAA…SDSEDDLPLK (145 aa)) is disordered. A compositionally biased stretch (polar residues) spans 32–52 (ITDQSSQSKSIKSATQFSVQR). A compositionally biased stretch (basic residues) spans 99-111 (AVSKKVKVKRKKL). Phosphoserine occurs at positions 135, 136, and 138. Phosphothreonine is present on residues threonine 200 and threonine 201. The segment covering 260–269 (PRKRRGRPKK) has biased composition (basic residues). Disordered stretches follow at residues 260–324 (PRKR…IASS), 343–367 (RVLYPPPRSKRRQNNKKTACSSSNK), 673–695 (AQQLTLNGGGPASTLSKPLKRGL), 711–749 (SASASGTPNGSGSSNGNTKRRHKKSQSNDSSSPDDHKLP), and 811–832 (KRHLLEQPTSVSGAGSSASNSP). A DNA-binding region (a.T hook 1) is located at residues 261-273 (RKRRGRPKKVVPT). The segment covering 294-306 (STTSTTQSTTPSP) has biased composition (low complexity). Residues 307–324 (KMQNENAVPTGSLPIASS) are compositionally biased toward polar residues. Positions 711–727 (SASASGTPNGSGSSNGN) are enriched in low complexity. Phosphoserine occurs at positions 740, 831, and 977. A compositionally biased stretch (low complexity) spans 820–831 (SVSGAGSSASNS). Disordered stretches follow at residues 980 to 1026 (QQTT…DCER) and 1049 to 1230 (SVVA…TTSL). Residues 989–999 (HEPEFDPDDEP) are compositionally biased toward acidic residues. DNA-binding regions (a.T hook) lie at residues 1065-1077 (GRPRGRKPKNREQ) and 1095-1107 (AKKRGRQPKQPVL). A compositionally biased stretch (pro residues) spans 1108–1117 (EEPPPTPPPQ). The segment covering 1186–1200 (AEAKRLDSIPTEHDP) has biased composition (basic and acidic residues). Positions 1205–1219 (ESHNPGPQDYASCSE) are enriched in polar residues. The AWS domain maps to 1339–1387 (FDHPTCNCKNQGEKSCLDNCLNRMVYTECSPSNCPAGEKCRNQKIQRHA). The SET domain maps to 1390–1506 (PGVERFMTAD…EGEELTYDYN (117 aa)). Residues 1514-1530 (EGQPCRCNTPQCRGVIG) form the Post-SET domain. 2 disordered regions span residues 1536-1575 (VKPLPAVEAKPSGEGLSGRNGRQRKQKAKKHAQRQAGKDI) and 1616-1648 (RASDAAATASSPALGTTNGDIPGRRPSTPSSPS). A compositionally biased stretch (basic residues) spans 1556 to 1568 (GRQRKQKAKKHAQ). Low complexity-rich tracts occupy residues 1619–1628 (DAAATASSPA) and 1639–1648 (RRPSTPSSPS). Positions 1681–1789 (KMAVVLRDIC…DSYEQQKIAS (109 aa)) constitute a Bromo domain. The disordered stretch occupies residues 1808-1839 (PKEVLSSEEEPGKIAVKKSPGAKERDSPIVPL). The PHD-type zinc finger occupies 1857-1903 (VIRCICGLYKDEGLMIQCSKCMVWQHTECTKADIDADNYQCERCEPR). A BAH domain is found at 1952–2072 (KVLPTKKHTY…KTARFFSKAK (121 aa)). The disordered stretch occupies residues 2205–2226 (SGRGARQRKTQQSSSSSTANST). Residues 2214–2226 (TQQSSSSSTANST) are compositionally biased toward low complexity.

Belongs to the class V-like SAM-binding methyltransferase superfamily. Histone-lysine methyltransferase family. SET2 subfamily. Component of a large multiprotein complex distinct from complexes containing ash2 or brm. Interacts (via SET domain) with trx (via SET domain). Interacts with nej/cbp. As to expression, expressed throughout development but is present at higher levels during the embryonic and pupal stages than during the larval stages. During the larval stages it accumulates primarily in imaginal disks.

It localises to the nucleus. It is found in the chromosome. It carries out the reaction L-lysyl(4)-[histone H3] + 3 S-adenosyl-L-methionine = N(6),N(6),N(6)-trimethyl-L-lysyl(4)-[histone H3] + 3 S-adenosyl-L-homocysteine + 3 H(+). Functionally, trithorax group (TrxG) protein that has histone methyltransferase activity. Specifically trimethylates 'Lys-4' of histone H3 (H3K4me3), a specific tag for epigenetic transcriptional activation. TrxG proteins are generally required to maintain the transcriptionally active state of homeotic genes throughout development. Does not act as a coactivator required for transcriptional activation, but specifically prevents inappropriate Polycomb Group (PcG) silencing of homeotic genes in cells in which they must stay transcriptionally active. This Drosophila melanogaster (Fruit fly) protein is Histone-lysine N-methyltransferase ash1 (ash1).